The primary structure comprises 321 residues: Degreening-related gene dee76 protein (321 aa).

The protein belongs to the Mo25 family.

The polypeptide is Degreening-related gene dee76 protein (DEE76) (Auxenochlorella protothecoides (Green microalga)).